Consider the following 602-residue polypeptide: Transcription factor COE4 (602 aa).

The tract at residues 64 to 67 is interaction with DNA; that stretch reads RKSN. A C5-type zinc finger spans residues 152 to 171; it reads CRVLLTHEIMCSRCCDRKSC. Interaction with DNA stretches follow at residues 198–205 and 237–240; these read NCLKNAGN and NNSK. Residues 256 to 338 form the IPT/TIG domain; sequence PCIKAISPGE…CKGCPGRFVY (83 aa). Disordered stretches follow at residues 448–476 and 558–602; these read PEPGYARSCSSASPRGFAPSPGSQQSGYG and PVLR…LAYS. Over residues 560 to 569 the composition is skewed to pro residues; that stretch reads LRPPSSPPQA.

It belongs to the COE family. As to quaternary structure, forms either a homodimer or a heterodimer with a related family member. Interacts with MAPK3/ERK1. Interacts with STAT5A. As to expression, most highly expressed in cytotoxic NK cells, especially CD16(+) NK cells, followed by CD8(+) T-cells.

The protein resides in the nucleus. Transcription factor. Binds to specific sequence motif 5'-CCCNNG[GA]G-3' in regulatory elements of putative target immunoregulatory genes such as NKG7, GZMA, and TBX21. Positively modulates transcription of NKG7. May play a role in regulating FAS/CD95-mediated apoptosis in cytotoxic NK cells and T-cells, probably downstream of interleukin IL2 signaling. The polypeptide is Transcription factor COE4 (EBF4) (Homo sapiens (Human)).